Consider the following 563-residue polypeptide: Arginine--tRNA ligase (563 aa).

The 'HIGH' region motif lies at 120 to 130; it reads PNIAKPFHIGH.

It belongs to the class-I aminoacyl-tRNA synthetase family. In terms of assembly, monomer.

The protein localises to the cytoplasm. The catalysed reaction is tRNA(Arg) + L-arginine + ATP = L-arginyl-tRNA(Arg) + AMP + diphosphate. This chain is Arginine--tRNA ligase, found in Clostridium botulinum (strain 657 / Type Ba4).